The chain runs to 510 residues: tRNA(Ile)-lysidine synthase (510 aa).

An ATP-binding site is contributed by Ser32 to Ser37.

It belongs to the tRNA(Ile)-lysidine synthase family.

It localises to the cytoplasm. It catalyses the reaction cytidine(34) in tRNA(Ile2) + L-lysine + ATP = lysidine(34) in tRNA(Ile2) + AMP + diphosphate + H(+). Ligates lysine onto the cytidine present at position 34 of the AUA codon-specific tRNA(Ile) that contains the anticodon CAU, in an ATP-dependent manner. Cytidine is converted to lysidine, thus changing the amino acid specificity of the tRNA from methionine to isoleucine. This chain is tRNA(Ile)-lysidine synthase, found in Blochmanniella pennsylvanica (strain BPEN).